The primary structure comprises 466 residues: MSIASVASVFNGDHAVGSQVTVRGWVRTRRDSKAGISFLALYDGSCFDPIQGVIPNNLPNYDDEVLKLTAGCSLVMTGDVVESPGAGQAFELQVTAVEVTGWVDDPDTYPMAAKRHSIEHLRELAHLRPRTNIIGAVARVRNCLSQAIHRFYHEQGFIWVSTPLITASDCEGAGEMFRVSTLDMENLPRTDAGKVDYDKDFFGKESFLTVSGQLNAETYACALSKVYTFGPTFRAENSNTTRHLAEFWMVEPEVAFATLDDAAKLAEDMLKYAFNAVLNERMDDLSFFNERVDKTVIERLQAFVSSDFAQVDYTDAVEILKNCGKKFEFAVEWGIDLQSEHERYLAEEHFKAPVVVKNYPKDIKAFYMRLNDDGKTVAAMDVLAPGIGEIIGGAQREERLDVLDARLAEMELSQEDYWWYRDLRRYGTVPHAGFGLGFERLVSYVTGVNNIRDVIPFPRAPRSASF.

The protein belongs to the class-II aminoacyl-tRNA synthetase family. In terms of assembly, homodimer.

It localises to the cytoplasm. The enzyme catalyses tRNA(Asn) + L-asparagine + ATP = L-asparaginyl-tRNA(Asn) + AMP + diphosphate + H(+). The protein is Asparagine--tRNA ligase of Shewanella denitrificans (strain OS217 / ATCC BAA-1090 / DSM 15013).